Consider the following 298-residue polypeptide: Probable endonuclease 4 (298 aa).

Zn(2+)-binding residues include histidine 69, histidine 111, glutamate 146, aspartate 180, histidine 183, histidine 215, aspartate 228, histidine 230, and glutamate 260.

The protein belongs to the AP endonuclease 2 family. Zn(2+) is required as a cofactor.

The catalysed reaction is Endonucleolytic cleavage to 5'-phosphooligonucleotide end-products.. In terms of biological role, endonuclease IV plays a role in DNA repair. It cleaves phosphodiester bonds at apurinic or apyrimidinic (AP) sites, generating a 3'-hydroxyl group and a 5'-terminal sugar phosphate. The chain is Probable endonuclease 4 from Bacillus cereus (strain G9842).